A 269-amino-acid chain; its full sequence is Surfeit locus protein 4 (269 aa).

Helical transmembrane passes span 64–84, 92–112, 179–199, 203–223, and 242–262; these read FLAT…CVLV, YACF…SILW, FFSI…AVGF, LAAL…NAFW, and TTSV…GVSM. Residues 266 to 269 carry the Di-lysine motif motif; the sequence is KKEW.

The protein belongs to the SURF4 family.

The protein localises to the endoplasmic reticulum membrane. It localises to the endoplasmic reticulum-Golgi intermediate compartment membrane. The protein resides in the golgi apparatus membrane. In terms of biological role, endoplasmic reticulum cargo receptor that mediates the export of lipoproteins by recruiting cargos into COPII vesicles to facilitate their secretion. This is Surfeit locus protein 4 from Danio rerio (Zebrafish).